Consider the following 127-residue polypeptide: Aspartate 1-decarboxylase (127 aa).

Ser25 serves as the catalytic Schiff-base intermediate with substrate; via pyruvic acid. Residue Ser25 is modified to Pyruvic acid (Ser). Thr57 contributes to the substrate binding site. The active-site Proton donor is Tyr58. 73–75 contributes to the substrate binding site; it reads GAA.

This sequence belongs to the PanD family. As to quaternary structure, heterooctamer of four alpha and four beta subunits. Pyruvate serves as cofactor. Post-translationally, is synthesized initially as an inactive proenzyme, which is activated by self-cleavage at a specific serine bond to produce a beta-subunit with a hydroxyl group at its C-terminus and an alpha-subunit with a pyruvoyl group at its N-terminus.

The protein resides in the cytoplasm. The enzyme catalyses L-aspartate + H(+) = beta-alanine + CO2. It functions in the pathway cofactor biosynthesis; (R)-pantothenate biosynthesis; beta-alanine from L-aspartate: step 1/1. Its function is as follows. Catalyzes the pyruvoyl-dependent decarboxylation of aspartate to produce beta-alanine. This is Aspartate 1-decarboxylase from Clostridium kluyveri (strain NBRC 12016).